A 122-amino-acid polypeptide reads, in one-letter code: Conotoxin flf14.2 (122 aa).

The first 22 residues, 1–22 (MGFRVLVLIVMVTTSALPFTFS), serve as a signal peptide directing secretion. Positions 23–96 (EESGRSPFRP…AESPVGQKRW (74 aa)) are excised as a propeptide. Positions 53 to 91 (RADGQPSDMRQPEMRRPEMRRPEVRRPEVRQPEFAESPV) are disordered. The segment covering 62 to 85 (RQPEMRRPEMRRPEVRRPEVRQPE) has biased composition (basic and acidic residues). 2 disulfide bridges follow: Cys101-Cys121 and Cys105-Cys117.

Belongs to the conotoxin R superfamily. As to expression, expressed by the venom duct.

Its subcellular location is the secreted. The sequence is that of Conotoxin flf14.2 from Conus anabathrum floridanus (Florida cone).